The chain runs to 160 residues: SsrA-binding protein (160 aa).

The segment at 131 to 160 (KKEYDKRDTEKARDSDREIQRAIRSKGKED) is disordered.

Belongs to the SmpB family.

The protein localises to the cytoplasm. In terms of biological role, required for rescue of stalled ribosomes mediated by trans-translation. Binds to transfer-messenger RNA (tmRNA), required for stable association of tmRNA with ribosomes. tmRNA and SmpB together mimic tRNA shape, replacing the anticodon stem-loop with SmpB. tmRNA is encoded by the ssrA gene; the 2 termini fold to resemble tRNA(Ala) and it encodes a 'tag peptide', a short internal open reading frame. During trans-translation Ala-aminoacylated tmRNA acts like a tRNA, entering the A-site of stalled ribosomes, displacing the stalled mRNA. The ribosome then switches to translate the ORF on the tmRNA; the nascent peptide is terminated with the 'tag peptide' encoded by the tmRNA and targeted for degradation. The ribosome is freed to recommence translation, which seems to be the essential function of trans-translation. The sequence is that of SsrA-binding protein from Azotobacter vinelandii (strain DJ / ATCC BAA-1303).